Here is a 302-residue protein sequence, read N- to C-terminus: Sulfate adenylyltransferase subunit 2 (302 aa).

The protein belongs to the PAPS reductase family. CysD subfamily. In terms of assembly, heterodimer composed of CysD, the smaller subunit, and CysN.

The enzyme catalyses sulfate + ATP + H(+) = adenosine 5'-phosphosulfate + diphosphate. Its pathway is sulfur metabolism; hydrogen sulfide biosynthesis; sulfite from sulfate: step 1/3. Its function is as follows. With CysN forms the ATP sulfurylase (ATPS) that catalyzes the adenylation of sulfate producing adenosine 5'-phosphosulfate (APS) and diphosphate, the first enzymatic step in sulfur assimilation pathway. APS synthesis involves the formation of a high-energy phosphoric-sulfuric acid anhydride bond driven by GTP hydrolysis by CysN coupled to ATP hydrolysis by CysD. This is Sulfate adenylyltransferase subunit 2 from Pectobacterium carotovorum subsp. carotovorum (strain PC1).